Here is a 280-residue protein sequence, read N- to C-terminus: Probable S-methyl-5'-thioinosine phosphorylase (280 aa).

Phosphate contacts are provided by residues threonine 8 and 50–51 (RH). Residue methionine 175 participates in substrate binding. Threonine 176 is a phosphate binding site. 199–201 (NYA) serves as a coordination point for substrate.

The protein belongs to the PNP/MTAP phosphorylase family. MTAP subfamily. Homotrimer.

The catalysed reaction is S-methyl-5'-thioinosine + phosphate = 5-(methylsulfanyl)-alpha-D-ribose 1-phosphate + hypoxanthine. Its pathway is purine metabolism; purine nucleoside salvage. Catalyzes the reversible phosphorylation of S-methyl-5'-thioinosine (MTI) to hypoxanthine and 5-methylthioribose-1-phosphate. Involved in the breakdown of S-methyl-5'-thioadenosine (MTA), a major by-product of polyamine biosynthesis. Catabolism of (MTA) occurs via deamination to MTI and phosphorolysis to hypoxanthine. This is Probable S-methyl-5'-thioinosine phosphorylase from Methanothermobacter thermautotrophicus (strain ATCC 29096 / DSM 1053 / JCM 10044 / NBRC 100330 / Delta H) (Methanobacterium thermoautotrophicum).